The chain runs to 92 residues: Kinetoplastid membrane protein 11B (92 aa).

This sequence belongs to the KMP-11 family. In terms of assembly, monomer.

Its subcellular location is the cytoplasm. It is found in the cytoskeleton. The protein localises to the cell projection. It localises to the cilium. The protein resides in the flagellum. Its function is as follows. May be involved in the regulation of the cytoskeleton through interaction with the subpellicular microtubules. May be involved in parasite mobility and attachment to the surface of the host cell. Behaves as a strong immunogen during infection. This Leishmania infantum protein is Kinetoplastid membrane protein 11B (KMP-11B).